A 95-amino-acid polypeptide reads, in one-letter code: Aspartyl/glutamyl-tRNA(Asn/Gln) amidotransferase subunit C (95 aa).

This sequence belongs to the GatC family. In terms of assembly, heterotrimer of A, B and C subunits.

The catalysed reaction is L-glutamyl-tRNA(Gln) + L-glutamine + ATP + H2O = L-glutaminyl-tRNA(Gln) + L-glutamate + ADP + phosphate + H(+). The enzyme catalyses L-aspartyl-tRNA(Asn) + L-glutamine + ATP + H2O = L-asparaginyl-tRNA(Asn) + L-glutamate + ADP + phosphate + 2 H(+). Functionally, allows the formation of correctly charged Asn-tRNA(Asn) or Gln-tRNA(Gln) through the transamidation of misacylated Asp-tRNA(Asn) or Glu-tRNA(Gln) in organisms which lack either or both of asparaginyl-tRNA or glutaminyl-tRNA synthetases. The reaction takes place in the presence of glutamine and ATP through an activated phospho-Asp-tRNA(Asn) or phospho-Glu-tRNA(Gln). The chain is Aspartyl/glutamyl-tRNA(Asn/Gln) amidotransferase subunit C from Sinorhizobium fredii (strain NBRC 101917 / NGR234).